We begin with the raw amino-acid sequence, 288 residues long: Bifunctional protein FolD (288 aa).

NADP(+) is bound by residues 165-167 (GRS), Ser-190, and Ile-231.

Belongs to the tetrahydrofolate dehydrogenase/cyclohydrolase family. As to quaternary structure, homodimer.

It carries out the reaction (6R)-5,10-methylene-5,6,7,8-tetrahydrofolate + NADP(+) = (6R)-5,10-methenyltetrahydrofolate + NADPH. The enzyme catalyses (6R)-5,10-methenyltetrahydrofolate + H2O = (6R)-10-formyltetrahydrofolate + H(+). It participates in one-carbon metabolism; tetrahydrofolate interconversion. Functionally, catalyzes the oxidation of 5,10-methylenetetrahydrofolate to 5,10-methenyltetrahydrofolate and then the hydrolysis of 5,10-methenyltetrahydrofolate to 10-formyltetrahydrofolate. The protein is Bifunctional protein FolD of Nitrosospira multiformis (strain ATCC 25196 / NCIMB 11849 / C 71).